We begin with the raw amino-acid sequence, 238 residues long: Probable transcriptional regulatory protein SGO_0454 (238 aa).

Belongs to the TACO1 family. YeeN subfamily.

It localises to the cytoplasm. This is Probable transcriptional regulatory protein SGO_0454 from Streptococcus gordonii (strain Challis / ATCC 35105 / BCRC 15272 / CH1 / DL1 / V288).